Reading from the N-terminus, the 424-residue chain is Serine--tRNA ligase (424 aa).

229–231 (TAE) lines the L-serine pocket. 260-262 (RSE) lines the ATP pocket. An L-serine-binding site is contributed by E283. An ATP-binding site is contributed by 347–350 (EISS). S383 contributes to the L-serine binding site.

The protein belongs to the class-II aminoacyl-tRNA synthetase family. Type-1 seryl-tRNA synthetase subfamily. As to quaternary structure, homodimer. The tRNA molecule binds across the dimer.

The protein resides in the cytoplasm. The enzyme catalyses tRNA(Ser) + L-serine + ATP = L-seryl-tRNA(Ser) + AMP + diphosphate + H(+). It catalyses the reaction tRNA(Sec) + L-serine + ATP = L-seryl-tRNA(Sec) + AMP + diphosphate + H(+). It participates in aminoacyl-tRNA biosynthesis; selenocysteinyl-tRNA(Sec) biosynthesis; L-seryl-tRNA(Sec) from L-serine and tRNA(Sec): step 1/1. Catalyzes the attachment of serine to tRNA(Ser). Is also able to aminoacylate tRNA(Sec) with serine, to form the misacylated tRNA L-seryl-tRNA(Sec), which will be further converted into selenocysteinyl-tRNA(Sec). This chain is Serine--tRNA ligase, found in Gluconacetobacter diazotrophicus (strain ATCC 49037 / DSM 5601 / CCUG 37298 / CIP 103539 / LMG 7603 / PAl5).